We begin with the raw amino-acid sequence, 177 residues long: Thymidine kinase (177 aa).

11–18 (GPMFSGKS) contributes to the ATP binding site. Catalysis depends on glutamate 83, which acts as the Proton acceptor. Position 113 (phenylalanine 113) interacts with substrate. Positions 138 and 141 each coordinate Zn(2+). 157-161 (IEIIG) is a binding site for substrate. Zn(2+)-binding residues include cysteine 170 and cysteine 173.

It belongs to the thymidine kinase family. In terms of assembly, homotetramer. Two molecules of substrate bind to each enzyme tetramer.

The enzyme catalyses thymidine + ATP = dTMP + ADP + H(+). In terms of biological role, phosphorylates thymidine and thymidine analogs, such as azidothymidine (AZT). Part of the salvage pathway for pyrimidine deoxyribonucleotide synthesis. The protein is Thymidine kinase (OPG101) of Procyon lotor (Raccoon).